The sequence spans 185 residues: uncharacterized protein (185 aa).

5 helical membrane-spanning segments follow: residues 4–24 (TYLTGYFPLIAILLFSSSLSI), 54–74 (LALFAAFALLYFMVLSALKLI), 98–118 (LRMGSMIYLGGGILSFVLLQN), 119–139 (VIWIVIWFAVVTLAYFVFTVY), and 153–173 (FILLELLFWFTFVIGILFIFI).

The protein localises to the cell membrane. This is an uncharacterized protein from Bacillus subtilis (strain 168).